A 209-amino-acid chain; its full sequence is Large ribosomal subunit protein uL3 (209 aa).

The tract at residues 129–153 (SRGPMSHGSKFHRAPGSMGAASDPS) is disordered.

This sequence belongs to the universal ribosomal protein uL3 family. As to quaternary structure, part of the 50S ribosomal subunit. Forms a cluster with proteins L14 and L19.

In terms of biological role, one of the primary rRNA binding proteins, it binds directly near the 3'-end of the 23S rRNA, where it nucleates assembly of the 50S subunit. The chain is Large ribosomal subunit protein uL3 from Clostridium perfringens (strain 13 / Type A).